A 344-amino-acid polypeptide reads, in one-letter code: Probable endonuclease lcl3 (344 aa).

A compositionally biased stretch (polar residues) spans 1–11; it reads MGWWSLGSSGS. The disordered stretch occupies residues 1–55; the sequence is MGWWSLGSSGSKADPEKSKANDSKSSNRRQQEEGEQSFIPPPLTSRTSSSSSSKS. Basic and acidic residues predominate over residues 13–22; sequence ADPEKSKAND. Low complexity predominate over residues 44-55; that stretch reads TSRTSSSSSSKS. A helical membrane pass occupies residues 77-93; that stretch reads LIPTALLTGGILFVVYV. Positions 115-282 constitute a TNase-like domain; the sequence is RSLLGRVTSV…KNRRQGLWKD (168 aa). Arginine 166 is an active-site residue. Residue aspartate 171 coordinates Ca(2+). Catalysis depends on residues glutamate 174 and arginine 214. The interval 291–327 is disordered; the sequence is FESPREYKTRMQSLDMSAESSSSSSSSSNTEKNPGLV. A compositionally biased stretch (polar residues) spans 300 to 309; it reads RMQSLDMSAE.

The protein belongs to the LCL3 family.

The protein resides in the mitochondrion. It localises to the membrane. This Talaromyces marneffei (strain ATCC 18224 / CBS 334.59 / QM 7333) (Penicillium marneffei) protein is Probable endonuclease lcl3 (lcl3).